The sequence spans 1637 residues: MNYILYILLILIIFSINNTFSIGSFVYTPDGYYNLYRINKFENFSKIPTKANSVNVEPHELYYPDICDSALKNKNSNEFSIDNFPGSPFLKANIKITKGSNMTLDPLLSIHPSYINILCIEGSFTAGSQQTLTLGGIIVLPGGNFHCNNCVLQFVDLSSTIIKIDPFGFLPGILSLGGSISLIGSQRILYSAKPIEDNVLEVNDISTLDPFNGFNVSIVSDSFPNVRTSRFTYNKNKLEMQDLTIPTTDLNIKLFFNDSGSLKFGGISTRTKSSIYITGDTKLHIENYLLDSIGKTSNKEYDDTKLTFSSDNPNNVTDIIIGKNQRFRNSLYIEFSNSVTIKNSVIIGNTGSSRSSLVFFQSNVNISGNLIVGTAGSSMIAQYGTEYIESSNNYFSLVLPNEFPTSPAFMDYGHEGNGIYSLSPNIFSTNDIFNGQKILYNFNFISRENVTGFDKDCFAPCDINSIVVPSLSQEPIDFSKNLVNPISINPVDYFLIVNSDEELKNTFFTIKDSTISSKIIVNLKGSGLVLKNIIGVNNFKLTGQVKRLDIYDSFFGSSTTPSLGDNGIKSSAVIIKNSSFYIDDFQLQNNQIYGSSIVPYLYELLNVDEFILVDSIFPTSQYQIPVGGKLDLIVKLVIISPVISRITCELESDNETITSSAISESVNKECKFPLTFKNDGSVNLKVTVKLKNVGDSEIMYIINFPKITIFSNYSFYSGWSMENSTENGIISVDGNSFKKGCSISSNDNSNNCTISNNIKYITNLPKLNISNDLNELFLNGITSINSNELVTITTRIDSETKYYQIQLFFIHQPIDDQPTPLSIYIENQPVFLLEPLESNSAPIFKNLTFNFDNINSLENINISFATRGNTYLTSMAIYSSLVIEYPIPVEKINLLPIIVPICVTVLVLLSILIVFFGARYYKHKKRRRLEIAVFGVELYSKKPSNNKSPVPSTPLIINSNQEQSSSNHISITVNRNSDIQTQSENNNLEPTTVETTTTTTTTAAGAILQTNVTLEMENLEIKPIINNNEPFFEDYSDEYDDSSDGAELNEDDVEDYINIIRGGNIKIEAEGELFVRQFERNTFDQEFFEYKKSKIPSPHLVPSLAHGDFIENPLNIIDILLDPVTNEIPLEHYLKTYKNRNGQSGKYRTNTQTHVLIADTIFQHCNDPDLPVSVSPYICDFGMNGRKSDLGEVCHDTITFKNKLSEPLYALFLFPEGDDSSITSSPFQSIELKPNVETSISLSVTLFSTTKYNEKVIVRFETLDVKQSWSTFVFLRLESELTNIIDFNEIIIKNYISEGTFGIVYRGIWRSSPVAVKLLKNEYVDHDEIEKEISLLERLRHPNILLYVGRFIFSGIHGIVTDYCSKGCLSKYIHENKYKITIIQKIRILIDISKACAYLHRNGITHRDLKPENILITSLNPKSLVCAKVSDFGTSKETNERYNLQTRRGTVAYMSNEILSQGSYTKSTDIYSFGMLCYELFSERIPYYSEPHWRIRELVLKNERPSLDQEIFKDTDISDIVTRCWSKNPSQRPTFDYLSKYLKHLLKKYDINNIIYDKDKKNKKKNKNNNNNNNNNNNNNNNNNNNNNNNDDHDDNNNNINDSDCDNNKNNNNNNNNNNNNNNNNNNNNNNNNNNNN.

Positions 1–19 are cleaved as a signal peptide; the sequence is MNYILYILLILIIFSINNT. The Extracellular segment spans residues 20 to 896; it reads FSIGSFVYTP…IPVEKINLLP (877 aa). A helical membrane pass occupies residues 897–917; it reads IIVPICVTVLVLLSILIVFFG. At 918–1637 the chain is on the cytoplasmic side; the sequence is ARYYKHKKRR…NNNNNNNNNN (720 aa). Residues 977–990 are compositionally biased toward polar residues; that stretch reads SDIQTQSENNNLEP. The disordered stretch occupies residues 977 to 1000; the sequence is SDIQTQSENNNLEPTTVETTTTTT. Over residues 991 to 1000 the composition is skewed to low complexity; the sequence is TTVETTTTTT. The Protein kinase domain maps to 1290–1547; that stretch reads IIIKNYISEG…LSKYLKHLLK (258 aa). ATP contacts are provided by residues 1296 to 1304 and lysine 1317; that span reads ISEGTFGIV. Residue aspartate 1408 is the Proton acceptor of the active site. The segment at 1557–1637 is disordered; the sequence is DKDKKNKKKN…NNNNNNNNNN (81 aa). Low complexity-rich tracts occupy residues 1568-1589 and 1597-1637; these read NNNNNNNNNNNNNNNNNNNNNN and NNNI…NNNN.

It in the N-terminal section; belongs to the GDT family. The protein in the C-terminal section; belongs to the protein kinase superfamily. TKL Ser/Thr protein kinase family.

The protein resides in the membrane. The catalysed reaction is L-seryl-[protein] + ATP = O-phospho-L-seryl-[protein] + ADP + H(+). It catalyses the reaction L-threonyl-[protein] + ATP = O-phospho-L-threonyl-[protein] + ADP + H(+). In terms of biological role, regulates the transition between growth and differentiation. The protein is Probable serine/threonine-protein kinase gdt2 (gdt2) of Dictyostelium discoideum (Social amoeba).